The sequence spans 148 residues: 3-hydroxyacyl-[acyl-carrier-protein] dehydratase FabZ (148 aa).

Histidine 48 is a catalytic residue.

This sequence belongs to the thioester dehydratase family. FabZ subfamily.

It localises to the cytoplasm. The enzyme catalyses a (3R)-hydroxyacyl-[ACP] = a (2E)-enoyl-[ACP] + H2O. In terms of biological role, involved in unsaturated fatty acids biosynthesis. Catalyzes the dehydration of short chain beta-hydroxyacyl-ACPs and long chain saturated and unsaturated beta-hydroxyacyl-ACPs. In Acinetobacter baylyi (strain ATCC 33305 / BD413 / ADP1), this protein is 3-hydroxyacyl-[acyl-carrier-protein] dehydratase FabZ.